A 350-amino-acid chain; its full sequence is RNA 3'-terminal phosphate cyclase (350 aa).

ATP-binding positions include Gln-100 and 290–294; that span reads FLGDQ. Residue His-314 is the Tele-AMP-histidine intermediate of the active site.

Belongs to the RNA 3'-terminal cyclase family. Type 1 subfamily.

It localises to the cytoplasm. It catalyses the reaction a 3'-end 3'-phospho-ribonucleotide-RNA + ATP = a 3'-end 2',3'-cyclophospho-ribonucleotide-RNA + AMP + diphosphate. In terms of biological role, catalyzes the conversion of 3'-phosphate to a 2',3'-cyclic phosphodiester at the end of RNA. The mechanism of action of the enzyme occurs in 3 steps: (A) adenylation of the enzyme by ATP; (B) transfer of adenylate to an RNA-N3'P to produce RNA-N3'PP5'A; (C) and attack of the adjacent 2'-hydroxyl on the 3'-phosphorus in the diester linkage to produce the cyclic end product. The biological role of this enzyme is unknown but it is likely to function in some aspects of cellular RNA processing. This is RNA 3'-terminal phosphate cyclase from Thermococcus sibiricus (strain DSM 12597 / MM 739).